A 453-amino-acid chain; its full sequence is Flavonol-3-O-rhamnosyltransferase (453 aa).

Histidine 24 functions as the Proton acceptor in the catalytic mechanism. Residue histidine 24 coordinates an anthocyanidin. The Charge relay role is filled by aspartate 119. Histidine 150 contributes to the an anthocyanidin binding site. UDP-beta-L-rhamnose is bound by residues threonine 280, alanine 333, histidine 350, asparagine 354, serine 355, and glutamate 358. Alanine 373 serves as a coordination point for an anthocyanidin.

The protein belongs to the UDP-glycosyltransferase family. As to expression, expressed in leaves, flowers, siliques, and stems. Expressed in the shoot apex.

It catalyses the reaction kaempferol + UDP-beta-L-rhamnose = kaempferol 3-O-alpha-L-rhamnoside + UDP + H(+). The catalysed reaction is UDP-beta-L-rhamnose + quercetin = quercitrin + UDP + H(+). It functions in the pathway flavonoid metabolism. Functionally, flavonol 3-O-rhamnosyltransferase that catalyzes the transfer of rhamnose from UDP-rhamnose to the 3-OH position of kaempferol and quercetin. Possesses low quercetin 3-O-glucosyltransferase activity in vitro. The protein is Flavonol-3-O-rhamnosyltransferase of Arabidopsis thaliana (Mouse-ear cress).